Here is a 139-residue protein sequence, read N- to C-terminus: MKKTAVLNAQLSGVIASLGHTDGLTICDAGLPIPSEQQCVDLALTKGIPSFLSTLEVVLTELFVERILLAEEIKQANPTIEQQLLEMINKLAQTQGRQIEIEYVVHSEFKQRSNQAKAVVRTGECSPYANVILYSGVPF.

Catalysis depends on histidine 20, which acts as the Proton donor. Substrate-binding positions include aspartate 28, histidine 106, and 128-130 (YAN).

This sequence belongs to the RbsD / FucU family. RbsD subfamily. Homodecamer.

The protein resides in the cytoplasm. It carries out the reaction beta-D-ribopyranose = beta-D-ribofuranose. The protein operates within carbohydrate metabolism; D-ribose degradation; D-ribose 5-phosphate from beta-D-ribopyranose: step 1/2. Functionally, catalyzes the interconversion of beta-pyran and beta-furan forms of D-ribose. The protein is D-ribose pyranase of Actinobacillus pleuropneumoniae serotype 7 (strain AP76).